The chain runs to 715 residues: Glycine--tRNA ligase beta subunit (715 aa).

It belongs to the class-II aminoacyl-tRNA synthetase family. In terms of assembly, tetramer of two alpha and two beta subunits.

It localises to the cytoplasm. The enzyme catalyses tRNA(Gly) + glycine + ATP = glycyl-tRNA(Gly) + AMP + diphosphate. In Nitrosomonas europaea (strain ATCC 19718 / CIP 103999 / KCTC 2705 / NBRC 14298), this protein is Glycine--tRNA ligase beta subunit.